The following is a 225-amino-acid chain: Agamous-like MADS-box protein TM6 (225 aa).

In terms of domain architecture, MADS-box spans 1-61 (MGRGKIEIKR…GKFHEYTSPT (61 aa)). Residues 84-174 (YERMQENLRK…LLNFEAKCDD (91 aa)) form the K-box domain.

In terms of tissue distribution, expressed during flower development in stamens, petals and carpels. Expressed in fruits and seeds.

It is found in the nucleus. Probable transcription factor involved in flower development. The chain is Agamous-like MADS-box protein TM6 from Vitis vinifera (Grape).